We begin with the raw amino-acid sequence, 940 residues long: Isoleucine--tRNA ligase (940 aa).

The 'HIGH' region signature appears at 58–68; sequence PYANGAIHIGH. E564 contacts L-isoleucyl-5'-AMP. A 'KMSKS' region motif is present at residues 605–609; sequence KMSKS. Residue K608 coordinates ATP. C903, C906, C923, and C926 together coordinate Zn(2+).

This sequence belongs to the class-I aminoacyl-tRNA synthetase family. IleS type 1 subfamily. Monomer. It depends on Zn(2+) as a cofactor.

Its subcellular location is the cytoplasm. The catalysed reaction is tRNA(Ile) + L-isoleucine + ATP = L-isoleucyl-tRNA(Ile) + AMP + diphosphate. In terms of biological role, catalyzes the attachment of isoleucine to tRNA(Ile). As IleRS can inadvertently accommodate and process structurally similar amino acids such as valine, to avoid such errors it has two additional distinct tRNA(Ile)-dependent editing activities. One activity is designated as 'pretransfer' editing and involves the hydrolysis of activated Val-AMP. The other activity is designated 'posttransfer' editing and involves deacylation of mischarged Val-tRNA(Ile). The chain is Isoleucine--tRNA ligase from Nitrosococcus oceani (strain ATCC 19707 / BCRC 17464 / JCM 30415 / NCIMB 11848 / C-107).